A 437-amino-acid polypeptide reads, in one-letter code: Glutamate-1-semialdehyde 2,1-aminomutase (437 aa).

An N6-(pyridoxal phosphate)lysine modification is found at K274.

The protein belongs to the class-III pyridoxal-phosphate-dependent aminotransferase family. HemL subfamily. Homodimer. The cofactor is pyridoxal 5'-phosphate.

The protein localises to the cytoplasm. It carries out the reaction (S)-4-amino-5-oxopentanoate = 5-aminolevulinate. It functions in the pathway porphyrin-containing compound metabolism; protoporphyrin-IX biosynthesis; 5-aminolevulinate from L-glutamyl-tRNA(Glu): step 2/2. This chain is Glutamate-1-semialdehyde 2,1-aminomutase, found in Leptothrix cholodnii (strain ATCC 51168 / LMG 8142 / SP-6) (Leptothrix discophora (strain SP-6)).